A 341-amino-acid chain; its full sequence is Phosphoribosylformylglycinamidine cyclo-ligase (341 aa).

This sequence belongs to the AIR synthase family.

It localises to the cytoplasm. It carries out the reaction 2-formamido-N(1)-(5-O-phospho-beta-D-ribosyl)acetamidine + ATP = 5-amino-1-(5-phospho-beta-D-ribosyl)imidazole + ADP + phosphate + H(+). The protein operates within purine metabolism; IMP biosynthesis via de novo pathway; 5-amino-1-(5-phospho-D-ribosyl)imidazole from N(2)-formyl-N(1)-(5-phospho-D-ribosyl)glycinamide: step 2/2. The chain is Phosphoribosylformylglycinamidine cyclo-ligase from Thermosynechococcus vestitus (strain NIES-2133 / IAM M-273 / BP-1).